Consider the following 1063-residue polypeptide: Exportin-T (1063 aa).

The protein belongs to the exportin family.

The protein resides in the nucleus. The protein localises to the cytoplasm. TRNA nucleus export receptor which facilitates tRNA translocation across the nuclear pore complex. Involved in pre-tRNA splicing, probably by affecting the interaction of pre-tRNA with splicing endonuclease. In Kluyveromyces lactis (strain ATCC 8585 / CBS 2359 / DSM 70799 / NBRC 1267 / NRRL Y-1140 / WM37) (Yeast), this protein is Exportin-T (LOS1).